The primary structure comprises 447 residues: N-succinylarginine dihydrolase (447 aa).

Substrate contacts are provided by residues 19-28, Asn-110, and 137-138; these read AGLSFGNEAS and HR. Glu-174 is an active-site residue. Arg-212 lines the substrate pocket. Residue His-248 is part of the active site. Residues Asp-250 and Asn-359 each contribute to the substrate site. The Nucleophile role is filled by Cys-365.

The protein belongs to the succinylarginine dihydrolase family. In terms of assembly, homodimer.

It carries out the reaction N(2)-succinyl-L-arginine + 2 H2O + 2 H(+) = N(2)-succinyl-L-ornithine + 2 NH4(+) + CO2. It participates in amino-acid degradation; L-arginine degradation via AST pathway; L-glutamate and succinate from L-arginine: step 2/5. Functionally, catalyzes the hydrolysis of N(2)-succinylarginine into N(2)-succinylornithine, ammonia and CO(2). The protein is N-succinylarginine dihydrolase of Escherichia coli (strain K12 / MC4100 / BW2952).